A 596-amino-acid chain; its full sequence is MRLRSQKRGNKFVALPAKTRKGKGKKLKPKNLTITKKDEVKKIKKTITPKPNNIDEDDGIGEVDDIMDITPNYQGNNDGNELDLQQTPIIPNEIKDLFMGDNWRKISGPHAVSIITKPQHRRYIALKGTMGTGKTHVTVESLNKITGSTGSILLIVGRKELANEIERRINGSCKVYNYLEKEEFSNGISLSRGGLLTERCVFIVCVNSITTDLFKEDGFKTDMIVVDEVETTFMNIVSESLMTYSAAIETRNTLVEKLFPYTNVLLTIDAALAEPMVVGCAKMFGGKFEEYKLDLVRIRPPIYHRAVQCSTAYNIIDHNPLEKRYDTLFNAITYHVYELGKRIVISVPYHKTALQLKRHILAARPQHFHKIPHVVVYTAKTRDARLARIKALQTGEQYGIEALAKEADVFIFNSCMSAGHSLNMDGYEACFSYFLINHMTCSVMEQLQMTARLRNNNSKTLYWGLMNTMNDPLRGIRDIEELKTYSTMMRKFGKWMGSSFDNGIKGFKILLKMAYPNIVFEKGVVKSREYPYKNNEIINQTMQNDASVLRKLFINPEPSKWRFVTQEHEALYGKDLPPRQFNYYSTLSGLYNVVLS.

Basic residues-rich tracts occupy residues 1 to 10 and 18 to 29; these read MRLRSQKRGN and KTRKGKGKKLKP. The tract at residues 1–30 is disordered; the sequence is MRLRSQKRGNKFVALPAKTRKGKGKKLKPK.

This is an uncharacterized protein from Magallana gigas (Pacific oyster).